We begin with the raw amino-acid sequence, 110 residues long: uncharacterized protein (110 aa).

This is an uncharacterized protein from Autographa californica nuclear polyhedrosis virus (AcMNPV).